The sequence spans 444 residues: 3-isopropylmalate dehydratase large subunit (444 aa).

The [4Fe-4S] cluster site is built by Xaa348, Cys408, and Xaa411. The disordered stretch occupies residues 423–444 (ERXXSHSNRNFEGRQGRGGRTH).

It belongs to the aconitase/IPM isomerase family. LeuC type 1 subfamily. Heterodimer of LeuC and LeuD. [4Fe-4S] cluster serves as cofactor.

It carries out the reaction (2R,3S)-3-isopropylmalate = (2S)-2-isopropylmalate. It functions in the pathway amino-acid biosynthesis; L-leucine biosynthesis; L-leucine from 3-methyl-2-oxobutanoate: step 2/4. Its function is as follows. Catalyzes the isomerization between 2-isopropylmalate and 3-isopropylmalate, via the formation of 2-isopropylmaleate. The protein is 3-isopropylmalate dehydratase large subunit of Buchnera aphidicola subsp. Uroleucon rudbeckiae.